The chain runs to 524 residues: 2-isopropylmalate synthase (524 aa).

A Pyruvate carboxyltransferase domain is found at 5 to 267; it reads VIIFDTTLRD…HTNIRHSEIH (263 aa). Mn(2+) is bound by residues Asp-14, His-202, His-204, and Asn-238. The interval 392 to 524 is regulatory domain; that stretch reads KLEYLGVQSG…KTDKINTESV (133 aa).

The protein belongs to the alpha-IPM synthase/homocitrate synthase family. LeuA type 1 subfamily. In terms of assembly, homodimer. It depends on Mn(2+) as a cofactor.

The protein resides in the cytoplasm. The enzyme catalyses 3-methyl-2-oxobutanoate + acetyl-CoA + H2O = (2S)-2-isopropylmalate + CoA + H(+). It functions in the pathway amino-acid biosynthesis; L-leucine biosynthesis; L-leucine from 3-methyl-2-oxobutanoate: step 1/4. Catalyzes the condensation of the acetyl group of acetyl-CoA with 3-methyl-2-oxobutanoate (2-ketoisovalerate) to form 3-carboxy-3-hydroxy-4-methylpentanoate (2-isopropylmalate). The sequence is that of 2-isopropylmalate synthase from Aeromonas hydrophila subsp. hydrophila (strain ATCC 7966 / DSM 30187 / BCRC 13018 / CCUG 14551 / JCM 1027 / KCTC 2358 / NCIMB 9240 / NCTC 8049).